Here is a 1039-residue protein sequence, read N- to C-terminus: Error-prone DNA polymerase (1039 aa).

This sequence belongs to the DNA polymerase type-C family. DnaE2 subfamily.

The protein localises to the cytoplasm. It carries out the reaction DNA(n) + a 2'-deoxyribonucleoside 5'-triphosphate = DNA(n+1) + diphosphate. Its function is as follows. DNA polymerase involved in damage-induced mutagenesis and translesion synthesis (TLS). It is not the major replicative DNA polymerase. The sequence is that of Error-prone DNA polymerase from Idiomarina loihiensis (strain ATCC BAA-735 / DSM 15497 / L2-TR).